A 447-amino-acid polypeptide reads, in one-letter code: Argininosuccinate synthase (447 aa).

ATP-binding positions include 17-25 (AFSGGLDTS) and Ala-43. Tyr-99 is a binding site for L-citrulline. ATP is bound by residues Gly-129 and Thr-131. L-aspartate contacts are provided by Thr-131, Asn-135, and Asp-136. An L-citrulline-binding site is contributed by Asn-135. Asp-136 serves as a coordination point for ATP. Arg-139 and Ser-192 together coordinate L-citrulline. Asp-194 lines the ATP pocket. The L-citrulline site is built by Thr-201, Glu-203, and Glu-280.

The protein belongs to the argininosuccinate synthase family. Type 2 subfamily. As to quaternary structure, homotetramer.

The protein localises to the cytoplasm. It carries out the reaction L-citrulline + L-aspartate + ATP = 2-(N(omega)-L-arginino)succinate + AMP + diphosphate + H(+). It functions in the pathway amino-acid biosynthesis; L-arginine biosynthesis; L-arginine from L-ornithine and carbamoyl phosphate: step 2/3. In Escherichia coli O8 (strain IAI1), this protein is Argininosuccinate synthase.